A 190-amino-acid polypeptide reads, in one-letter code: Orotate phosphoribosyltransferase (190 aa).

5-phospho-alpha-D-ribose 1-diphosphate-binding positions include Arg-101, Lys-102, Lys-105, His-107, and 128 to 136 (EDVVTTGGS). Orotate is bound by residues Thr-132 and Arg-160.

It belongs to the purine/pyrimidine phosphoribosyltransferase family. PyrE subfamily. As to quaternary structure, homodimer. Mg(2+) is required as a cofactor.

It catalyses the reaction orotidine 5'-phosphate + diphosphate = orotate + 5-phospho-alpha-D-ribose 1-diphosphate. Its pathway is pyrimidine metabolism; UMP biosynthesis via de novo pathway; UMP from orotate: step 1/2. Catalyzes the transfer of a ribosyl phosphate group from 5-phosphoribose 1-diphosphate to orotate, leading to the formation of orotidine monophosphate (OMP). The polypeptide is Orotate phosphoribosyltransferase (Synechococcus sp. (strain CC9605)).